A 398-amino-acid chain; its full sequence is uncharacterized protein (398 aa).

The disordered stretch occupies residues 313–398 (KTIKSSGSKT…TSKSIKYYEV (86 aa)). 2 stretches are compositionally biased toward low complexity: residues 314-333 (TIKSSGSKTSKSIGSKTNKS) and 343-398 (GSKT…YYEV).

This is an uncharacterized protein from Acanthamoeba polyphaga mimivirus (APMV).